Consider the following 149-residue polypeptide: Alpha-crystallin A chain (149 aa).

The region spanning 41–149 (LFRSVLESGI…DASHGERPIP (109 aa)) is the sHSP domain. Residues His-89, Glu-91, His-96, and His-143 each coordinate Zn(2+).

It belongs to the small heat shock protein (HSP20) family. As to quaternary structure, heteropolymer composed of three CRYAA and one CRYAB subunits. Inter-subunit bridging via zinc ions enhances stability, which is crucial as there is no protein turn over in the lens. Can also form homodimers and homotetramers (dimers of dimers) which serve as the building blocks of homooligomers. Within homooligomers, the zinc-binding motif is created from residues of 3 different molecules. His-89 and Glu-91 from one molecule are ligands of the zinc ion, and His-96 and His-143 residues from additional molecules complete the site with tetrahedral coordination geometry. Part of a complex required for lens intermediate filament formation composed of BFSP1, BFSP2 and CRYAA.

It localises to the cytoplasm. Its subcellular location is the nucleus. Functionally, contributes to the transparency and refractive index of the lens. May act as a chaperone, preventing aggregation of various proteins under a wide range of stress conditions. The protein is Alpha-crystallin A chain (CRYAA) of Columba livia (Rock dove).